The chain runs to 600 residues: Potassium-transporting ATPase potassium-binding subunit (600 aa).

11 helical membrane passes run 6–26 (IILL…LGTY), 65–85 (GYAI…YAVQ), 136–156 (ALSG…YALI), 179–199 (LYVL…QGVI), 283–303 (FSNL…CFTF), 314–334 (WAIL…VMGA), 367–387 (FGIS…CGAV), 419–439 (GLYG…LMIG), 458–478 (SLVI…AVVL), 523–543 (VMLA…VLAI), and 566–586 (LFIA…YVPA).

Belongs to the KdpA family. In terms of assembly, the system is composed of three essential subunits: KdpA, KdpB and KdpC.

It is found in the cell inner membrane. Its function is as follows. Part of the high-affinity ATP-driven potassium transport (or Kdp) system, which catalyzes the hydrolysis of ATP coupled with the electrogenic transport of potassium into the cytoplasm. This subunit binds the periplasmic potassium ions and delivers the ions to the membrane domain of KdpB through an intramembrane tunnel. This chain is Potassium-transporting ATPase potassium-binding subunit, found in Janthinobacterium sp. (strain Marseille) (Minibacterium massiliensis).